The primary structure comprises 132 residues: Large ribosomal subunit protein uL14 (132 aa).

Belongs to the universal ribosomal protein uL14 family. Part of the 50S ribosomal subunit. Forms a cluster with proteins L3 and L24e, part of which may contact the 16S rRNA in 2 intersubunit bridges.

Binds to 23S rRNA. Forms part of two intersubunit bridges in the 70S ribosome. In Methanosphaera stadtmanae (strain ATCC 43021 / DSM 3091 / JCM 11832 / MCB-3), this protein is Large ribosomal subunit protein uL14.